The chain runs to 147 residues: Large ribosomal subunit protein uL15 (147 aa).

The tract at residues 1–62 (MDLNTLKPAL…GQMPLQRRLP (62 aa)) is disordered. Positions 30–39 (TATKGHKGQK) are enriched in basic residues.

The protein belongs to the universal ribosomal protein uL15 family. As to quaternary structure, part of the 50S ribosomal subunit.

Functionally, binds to the 23S rRNA. This Pelobacter propionicus (strain DSM 2379 / NBRC 103807 / OttBd1) protein is Large ribosomal subunit protein uL15.